A 669-amino-acid polypeptide reads, in one-letter code: DNA mismatch repair protein MutL (669 aa).

Positions 357 to 379 are disordered; sequence EQRQNTENNQEKTFSSEESNSKS. Residues 361 to 379 show a composition bias toward polar residues; that stretch reads NTENNQEKTFSSEESNSKS.

It belongs to the DNA mismatch repair MutL/HexB family.

Functionally, this protein is involved in the repair of mismatches in DNA. It is required for dam-dependent methyl-directed DNA mismatch repair. May act as a 'molecular matchmaker', a protein that promotes the formation of a stable complex between two or more DNA-binding proteins in an ATP-dependent manner without itself being part of a final effector complex. In Staphylococcus aureus (strain Mu3 / ATCC 700698), this protein is DNA mismatch repair protein MutL.